The primary structure comprises 508 residues: Adenylosuccinate synthetase 1, chloroplastic (508 aa).

A chloroplast-targeting transit peptide spans 1-56 (MNISILRLDSNPITTATSPATATANHRSGILGCYNGTYSCRLNQLQQRKKNPSIIV). GTP is bound by residues 95–101 (GDEGKGK) and 123–125 (GHT). The active-site Proton acceptor is aspartate 96. Positions 96 and 123 each coordinate Mg(2+). Residues 96 to 99 (DEGK), 121 to 124 (NAGH), threonine 213, arginine 227, glutamine 307, threonine 322, and arginine 386 each bind IMP. The active-site Proton donor is the histidine 124. Residue 382-388 (TTTGRPR) participates in substrate binding. GTP contacts are provided by residues arginine 388, 414-416 (KLD), and 497-499 (GIG).

This sequence belongs to the adenylosuccinate synthetase family. In terms of assembly, homodimer. Requires Mg(2+) as cofactor.

Its subcellular location is the plastid. The protein localises to the chloroplast. It catalyses the reaction IMP + L-aspartate + GTP = N(6)-(1,2-dicarboxyethyl)-AMP + GDP + phosphate + 2 H(+). It functions in the pathway purine metabolism; AMP biosynthesis via de novo pathway; AMP from IMP: step 1/2. Plays an important role in the de novo pathway and in the salvage pathway of purine nucleotide biosynthesis. Catalyzes the first committed step in the biosynthesis of AMP from IMP. This chain is Adenylosuccinate synthetase 1, chloroplastic, found in Capsicum frutescens (Cayenne pepper).